The sequence spans 325 residues: Probable WRKY transcription factor 11 (325 aa).

Residues 240–306 constitute a DNA-binding region (WRKY); sequence KIADIPPDEY…YEGEHRHNQS (67 aa).

Belongs to the WRKY group II-d family. In terms of tissue distribution, in young, mature and senescent leaves.

Its subcellular location is the nucleus. Transcription factor. Interacts specifically with the W box (5'-(T)TGAC[CT]-3'), a frequently occurring elicitor-responsive cis-acting element. Regulates rhizobacterium B.cereus AR156-induced systemic resistance (ISR) to P.syringae pv. tomato DC3000, probably by activating the jasmonic acid (JA)- signaling pathway. The protein is Probable WRKY transcription factor 11 (WRKY11) of Arabidopsis thaliana (Mouse-ear cress).